Consider the following 632-residue polypeptide: 1-deoxy-D-xylulose-5-phosphate synthase (632 aa).

Residues His79 and 120–122 each bind thiamine diphosphate; that span reads GHA. Asp151 provides a ligand contact to Mg(2+). Thiamine diphosphate is bound by residues 152–153, Asn180, Phe292, and Glu376; that span reads GS. Asn180 contacts Mg(2+).

It belongs to the transketolase family. DXPS subfamily. Homodimer. The cofactor is Mg(2+). It depends on thiamine diphosphate as a cofactor.

It carries out the reaction D-glyceraldehyde 3-phosphate + pyruvate + H(+) = 1-deoxy-D-xylulose 5-phosphate + CO2. Its pathway is metabolic intermediate biosynthesis; 1-deoxy-D-xylulose 5-phosphate biosynthesis; 1-deoxy-D-xylulose 5-phosphate from D-glyceraldehyde 3-phosphate and pyruvate: step 1/1. Catalyzes the acyloin condensation reaction between C atoms 2 and 3 of pyruvate and glyceraldehyde 3-phosphate to yield 1-deoxy-D-xylulose-5-phosphate (DXP). The protein is 1-deoxy-D-xylulose-5-phosphate synthase of Azobacteroides pseudotrichonymphae genomovar. CFP2.